The chain runs to 327 residues: ATPase ASNA1 homolog (327 aa).

26 to 33 (KGGVGKTT) is a binding site for ATP. Asp-57 is a catalytic residue. ATP is bound by residues Glu-238 and Asn-265. Residues Cys-274 and Cys-277 each contribute to the Zn(2+) site.

The protein belongs to the arsA ATPase family. Homodimer.

The protein localises to the cytoplasm. Its subcellular location is the endoplasmic reticulum. In terms of biological role, ATPase required for the post-translational delivery of tail-anchored (TA) proteins to the endoplasmic reticulum. Recognizes and selectively binds the transmembrane domain of TA proteins in the cytosol. This complex then targets to the endoplasmic reticulum by membrane-bound receptors, where the tail-anchored protein is released for insertion. This process is regulated by ATP binding and hydrolysis. ATP binding drives the homodimer towards the closed dimer state, facilitating recognition of newly synthesized TA membrane proteins. ATP hydrolysis is required for insertion. Subsequently, the homodimer reverts towards the open dimer state, lowering its affinity for the membrane-bound receptor, and returning it to the cytosol to initiate a new round of targeting. The sequence is that of ATPase ASNA1 homolog from Entamoeba dispar (strain ATCC PRA-260 / SAW760).